The chain runs to 471 residues: Putative multidrug resistance protein MdtD (471 aa).

The next 13 membrane-spanning stretches (helical) occupy residues 12–32 (LWIV…VNTA), 49–69 (MVIV…GWLA), 77–97 (IFFT…QSST), 106–126 (VLQG…VMKI), 138–158 (FVTL…GLLV), 165–185 (WIFL…LWLM), 197–217 (FSGF…LDGY), 225–245 (AGLG…LWHA), 263–285 (FSLG…FMTP), 290–312 (IGLG…GSMG), 342–362 (LLFM…VMLF), 396–416 (MVMQ…LGAF), and 431–451 (IFFW…LVFA).

The protein belongs to the major facilitator superfamily. TCR/Tet family.

It localises to the cell inner membrane. The sequence is that of Putative multidrug resistance protein MdtD from Cronobacter sakazakii (strain ATCC BAA-894) (Enterobacter sakazakii).